Reading from the N-terminus, the 809-residue chain is Leucine--tRNA ligase (809 aa).

Residues 40 to 50 (PYPSGRIHMGH) carry the 'HIGH' region motif. The 'KMSKS' region motif lies at 579–583 (KMSKS). K582 provides a ligand contact to ATP.

Belongs to the class-I aminoacyl-tRNA synthetase family.

The protein resides in the cytoplasm. It carries out the reaction tRNA(Leu) + L-leucine + ATP = L-leucyl-tRNA(Leu) + AMP + diphosphate. The polypeptide is Leucine--tRNA ligase (Campylobacter jejuni (strain RM1221)).